A 149-amino-acid chain; its full sequence is Calmodulin (149 aa).

Ala-2 carries the N-acetylalanine modification. EF-hand domains lie at 8-43, 44-79, 81-116, and 117-149; these read EQIA…LGQN, PTEA…KMKD, DSEE…LGEK, and LTDE…MTSK. The Ca(2+) site is built by Asp-21, Asp-23, Asp-25, Thr-27, Glu-32, Asp-57, Asp-59, Asn-61, Thr-63, Glu-68, Asp-94, Asp-96, Asn-98, and Glu-105. At Lys-116 the chain carries N6,N6,N6-trimethyllysine. Ca(2+) is bound by residues Asp-130, Asp-132, Asp-134, Gln-136, and Glu-141.

It belongs to the calmodulin family.

Functionally, calmodulin mediates the control of a large number of enzymes, ion channels and other proteins by Ca(2+). Among the enzymes to be stimulated by the calmodulin-Ca(2+) complex are a number of protein kinases and phosphatases. The sequence is that of Calmodulin from Metridium senile (Brown sea anemone).